Reading from the N-terminus, the 281-residue chain is Phosphoglycerate mutase-like protein AT74H (281 aa).

The active-site Tele-phosphohistidine intermediate is His17. Residue Glu109 is the Proton donor/acceptor of the active site.

Belongs to the phosphoglycerate mutase family.

Functionally, may play a role in carbohydrates metabolism. This Arabidopsis thaliana (Mouse-ear cress) protein is Phosphoglycerate mutase-like protein AT74H.